The sequence spans 117 residues: Ig heavy chain V region 1-72 (117 aa).

An N-terminal signal peptide occupies residues 1–19 (MGWSCIMLFLAATATGVHS). Residues 20-49 (QVQLQQPGAELVKPGASVKLSCKASGYTFT) form a framework-1 region. A disulfide bridge connects residues C41 and C115. The segment at 50 to 54 (SYWMH) is complementarity-determining-1. Residues 55 to 68 (WVKQRPGRGLEWIG) are framework-2. The complementarity-determining-2 stretch occupies residues 69 to 85 (RIDPNSGGTKYNEKFKS). The segment at 86-117 (KATLTVDKPSSTAYMQLSSLTSEDSAVYYCAR) is framework-3.

This is Ig heavy chain V region 1-72 from Mus musculus (Mouse).